The chain runs to 149 residues: Putative pre-16S rRNA nuclease (149 aa).

It belongs to the YqgF nuclease family.

It is found in the cytoplasm. Functionally, could be a nuclease involved in processing of the 5'-end of pre-16S rRNA. The sequence is that of Putative pre-16S rRNA nuclease from Cupriavidus metallidurans (strain ATCC 43123 / DSM 2839 / NBRC 102507 / CH34) (Ralstonia metallidurans).